Consider the following 132-residue polypeptide: Small ribosomal subunit protein uS8 (132 aa).

This sequence belongs to the universal ribosomal protein uS8 family. Part of the 30S ribosomal subunit. Contacts proteins S5 and S12.

In terms of biological role, one of the primary rRNA binding proteins, it binds directly to 16S rRNA central domain where it helps coordinate assembly of the platform of the 30S subunit. This chain is Small ribosomal subunit protein uS8, found in Enterococcus faecalis (strain ATCC 700802 / V583).